A 303-amino-acid chain; its full sequence is Probable cell division protein WhiA (303 aa).

A DNA-binding region (H-T-H motif) is located at residues 272 to 303 (SIQQIADSLETPLSKSGVNHRLRKINKIADEL).

This sequence belongs to the WhiA family.

Functionally, involved in cell division and chromosome segregation. The chain is Probable cell division protein WhiA from Streptococcus agalactiae serotype Ia (strain ATCC 27591 / A909 / CDC SS700).